Here is a 367-residue protein sequence, read N- to C-terminus: Small ribosomal subunit biogenesis GTPase RsgA (367 aa).

A CP-type G domain is found at alanine 112 to leucine 267. Residues asparagine 157–aspartate 160 and glycine 209–threonine 217 each bind GTP. Zn(2+) contacts are provided by cysteine 291, cysteine 296, histidine 298, and cysteine 304.

The protein belongs to the TRAFAC class YlqF/YawG GTPase family. RsgA subfamily. Monomer. Associates with 30S ribosomal subunit, binds 16S rRNA. It depends on Zn(2+) as a cofactor.

The protein resides in the cytoplasm. Its function is as follows. One of several proteins that assist in the late maturation steps of the functional core of the 30S ribosomal subunit. Helps release RbfA from mature subunits. May play a role in the assembly of ribosomal proteins into the subunit. Circularly permuted GTPase that catalyzes slow GTP hydrolysis, GTPase activity is stimulated by the 30S ribosomal subunit. The chain is Small ribosomal subunit biogenesis GTPase RsgA from Opitutus terrae (strain DSM 11246 / JCM 15787 / PB90-1).